The chain runs to 498 residues: Myocyte-specific enhancer factor 2A (498 aa).

In terms of domain architecture, MADS-box spans 3-57 (RKKIQITRIMDERNRQVTFTKRKFGLMKKAYELSVLCDCEIALIIFNSSNKLFQY). The mef2-type DNA-binding region spans 58–86 (ASTDMDKVLLKYTEYNEPHESRTNSDIVE). Ser-59 carries the phosphoserine; by CK2 modification. Residues Ser-98 and Ser-108 each carry the phosphoserine modification. Phosphothreonine is present on Ser-108. Positions 172–220 (LADSSMLSPPPATLHRNVSPGAPQRPPSTGSASGMLSTTDLTVPNGAGN) are disordered. Over residues 198–220 (PSTGSASGMLSTTDLTVPNGAGN) the composition is skewed to polar residues. Ser-233 carries the phosphoserine modification. Positions 240-268 (TGANSLGKVMPTKSPPPPGGGSLGMNSRK) are disordered. Lys-247 carries the post-translational modification N6-acetyllysine. Ser-253 carries the post-translational modification Phosphoserine. The required for interaction with MAPKs stretch occupies residues 264–281 (MNSRKPDLRVVIPPSSKG). A beta domain region spans residues 287-294 (SEEEELEL). Phosphothreonine; by MAPK7 occurs at positions 310 and 317. Position 310 is a phosphothreonine; by NLK (Thr-310). Ser-353 carries the post-translational modification Phosphoserine; by MAPK7. Residues 388-400 (SNLSINTNQNINI) show a composition bias toward polar residues. Residues 388 to 498 (SNLSINTNQN…KRMRMDTWVT (111 aa)) are disordered. Residue Lys-401 is modified to N6-acetyllysine; alternate. Residue Lys-401 forms a Glycyl lysine isopeptide (Lys-Gly) (interchain with G-Cter in SUMO); alternate linkage. Position 406 is a phosphoserine (Ser-406). Thr-413 carries the phosphothreonine modification. Over residues 426–436 (QQPPPQPPQPQ) the composition is skewed to pro residues. Phosphoserine is present on Ser-444. Residues 444–457 (SPVDSLSSSSSSYD) are compositionally biased toward low complexity. 2 stretches are compositionally biased toward basic and acidic residues: residues 458–468 (GSDREDPRGDF) and 479–498 (NTEDRESPSVKRMRMDTWVT).

This sequence belongs to the MEF2 family. Binds DNA as a homo- or heterodimer. Dimerizes with MEF2D. Interacts with HDAC7. Interacts with PIAS1; the interaction enhances sumoylation. Interacts with HDAC4, HDAC9 and SLC2A4RG. Interacts (via the N-terminal) with MAPK7; the interaction results in the phosphorylation and transcriptional activity of MEF2A. Constitutive phosphorylation on Ser-406 promotes Lys-401 sumoylation thus preventing acetylation at this site. Dephosphorylation on Ser-406 by PPP3CA upon neuron depolarization promotes a switch from sumoylation to acetylation on residue Lys-403 leading to inhibition of dendrite claw differentiation. Phosphorylation on Thr-312 and Thr-319 are the main sites involved in p38 MAPK signaling and activate transcription. Phosphorylated on these sites by MAPK14/p38alpha and MAPK11/p38beta, but not by MAPK13/p38delta nor by MAPK12/p38gamma. Phosphorylation on Ser-408 by CDK5 induced by neurotoxicity inhibits MEF2A transcriptional activation leading to apoptosis of cortical neurons. Phosphorylation on Thr-312, Thr-319 and Ser-355 can be induced by EGF. Isoform 3 is phosphorylated on Ser-98 and Thr-108. In terms of processing, sumoylation on Lys-401 is enhanced by PIAS1 and represses transcriptional activity. Phosphorylation on Ser-406 is required for sumoylation. Has no effect on nuclear location nor on DNA binding. Sumoylated with SUMO1 and, to a lesser extent with SUMO2 and SUMO3. PIASx facilitates sumoylation in postsynaptic dendrites in the cerebellar cortex and promotes their morphogenesis. Post-translationally, acetylation on Lys-401 activates transcriptional activity. Acetylated by p300 on several sites in diffentiating myocytes. Acetylation on Lys-4 increases DNA binding and transactivation. Hyperacetylation by p300 leads to enhanced cardiac myocyte growth and heart failure. Proteolytically cleaved in cerebellar granule neurons on several sites by caspase 3 and caspase 7 following neurotoxicity. Preferentially cleaves the CDK5-mediated hyperphosphorylated form which leads to neuron apoptosis and transcriptional inactivation. Widely expressed though mainly restricted to skeletal and cardiac muscle, brain, neurons and lymphocytes. Differentially expressed depending on if isoforms contain the beta domain or not, with the total expression of the beta domain-lacking isoforms vastly exceeding that of the beta domain-containing isoforms. Isoforms containing the beta domain are expressed primarily in skeletal and cardiac muscle and in brain. Also present in lung and testis. Splicing to include the beta domain is induced in differentiating myocytes. Isoforms lacking the beta domain are expressed less abundantly in skeletal muscle, brain and lymphocytes, and are uniquely found in ovary, liver, spleen and kidney. In embryos, the beta domain-containing and beta domain-lacking isoforms are equally expressed. Also expressed cerebellar granule neurons and other regions of the CNS. Highest levels in the olfactory bulb, cortex, hippocampus, thalamus and cerebellum.

It is found in the nucleus. Transcriptional activator which binds specifically to the MEF2 element, 5'-YTA[AT](4)TAR-3', found in numerous muscle-specific genes. Also involved in the activation of numerous growth factor- and stress-induced genes. Mediates cellular functions not only in skeletal and cardiac muscle development, but also in neuronal differentiation and survival. Plays diverse roles in the control of cell growth, survival and apoptosis via p38 MAPK signaling in muscle-specific and/or growth factor-related transcription. In cerebellar granule neurons, phosphorylated and sumoylated MEF2A represses transcription of NUR77 promoting synaptic differentiation. Associates with chromatin to the ZNF16 promoter. In Mus musculus (Mouse), this protein is Myocyte-specific enhancer factor 2A (Mef2a).